The chain runs to 191 residues: ATP synthase subunit delta (191 aa).

It belongs to the ATPase delta chain family. F-type ATPases have 2 components, F(1) - the catalytic core - and F(0) - the membrane proton channel. F(1) has five subunits: alpha(3), beta(3), gamma(1), delta(1), epsilon(1). F(0) has three main subunits: a(1), b(2) and c(10-14). The alpha and beta chains form an alternating ring which encloses part of the gamma chain. F(1) is attached to F(0) by a central stalk formed by the gamma and epsilon chains, while a peripheral stalk is formed by the delta and b chains.

It localises to the cell inner membrane. In terms of biological role, f(1)F(0) ATP synthase produces ATP from ADP in the presence of a proton or sodium gradient. F-type ATPases consist of two structural domains, F(1) containing the extramembraneous catalytic core and F(0) containing the membrane proton channel, linked together by a central stalk and a peripheral stalk. During catalysis, ATP synthesis in the catalytic domain of F(1) is coupled via a rotary mechanism of the central stalk subunits to proton translocation. Functionally, this protein is part of the stalk that links CF(0) to CF(1). It either transmits conformational changes from CF(0) to CF(1) or is implicated in proton conduction. The chain is ATP synthase subunit delta from Halothermothrix orenii (strain H 168 / OCM 544 / DSM 9562).